Here is a 582-residue protein sequence, read N- to C-terminus: Arginine--tRNA ligase (582 aa).

The 'HIGH' region signature appears at 128-138 (PNLAKEMHVGH).

Belongs to the class-I aminoacyl-tRNA synthetase family. Monomer.

It is found in the cytoplasm. The enzyme catalyses tRNA(Arg) + L-arginine + ATP = L-arginyl-tRNA(Arg) + AMP + diphosphate. This chain is Arginine--tRNA ligase, found in Colwellia psychrerythraea (strain 34H / ATCC BAA-681) (Vibrio psychroerythus).